Here is a 763-residue protein sequence, read N- to C-terminus: Phosphoglycerol transferase I (763 aa).

The next 4 helical transmembrane spans lie at 1–21 (MSELLSFALFLASVLIYAWKA), 26–46 (WWFAATLTVLGLFVVLNITLF), 77–97 (ILPGIGIVLGLTAVFGALGWI), and 108–128 (FGYSLLALLLALGSVDASPAF).

Belongs to the OpgB family.

It is found in the cell inner membrane. The enzyme catalyses a phosphatidylglycerol + a membrane-derived-oligosaccharide D-glucose = a 1,2-diacyl-sn-glycerol + a membrane-derived-oligosaccharide 6-(glycerophospho)-D-glucose.. Its pathway is glycan metabolism; osmoregulated periplasmic glucan (OPG) biosynthesis. Transfers a phosphoglycerol residue from phosphatidylglycerol to the membrane-bound nascent glucan backbones. This Escherichia coli O17:K52:H18 (strain UMN026 / ExPEC) protein is Phosphoglycerol transferase I.